Consider the following 237-residue polypeptide: Eukaryotic translation initiation factor 3 subunit K (237 aa).

Residues Cys44–Asp219 enclose the PCI domain.

Belongs to the eIF-3 subunit K family. As to quaternary structure, component of the eukaryotic translation initiation factor 3 (eIF-3) complex.

Its subcellular location is the cytoplasm. In terms of biological role, component of the eukaryotic translation initiation factor 3 (eIF-3) complex, which is involved in protein synthesis of a specialized repertoire of mRNAs and, together with other initiation factors, stimulates binding of mRNA and methionyl-tRNAi to the 40S ribosome. The eIF-3 complex specifically targets and initiates translation of a subset of mRNAs involved in cell proliferation. The polypeptide is Eukaryotic translation initiation factor 3 subunit K (Neurospora crassa (strain ATCC 24698 / 74-OR23-1A / CBS 708.71 / DSM 1257 / FGSC 987)).